Consider the following 174-residue polypeptide: Gamma-crystallin C (174 aa).

2 consecutive Beta/gamma crystallin 'Greek key' domains span residues Gly2–Ser40 and Gly41–Pro83. Cys23 carries the post-translational modification S-methylcysteine. Residues Gln84–Ser87 form a connecting peptide region. Beta/gamma crystallin 'Greek key' domains lie at His88 to Glu128 and Gly129 to Val171.

It belongs to the beta/gamma-crystallin family. As to quaternary structure, monomer.

Crystallins are the dominant structural components of the vertebrate eye lens. The chain is Gamma-crystallin C (CRYGC) from Macaca mulatta (Rhesus macaque).